The sequence spans 350 residues: Kelch domain-containing protein 8A (350 aa).

Kelch repeat units follow at residues 1-31, 32-79, 81-127, 128-175, 176-222, 224-278, and 279-326; these read MEVP…ETGG, QVYA…ALGK, IMVI…AKDY, RVYA…LRGS, KIYV…TLDN, LYSL…SLSG, and RVIV…VVKN.

The protein is Kelch domain-containing protein 8A (KLHDC8A) of Homo sapiens (Human).